A 167-amino-acid polypeptide reads, in one-letter code: CDP-archaeol synthase (167 aa).

The next 5 membrane-spanning stretches (helical) occupy residues Ile4–Leu24, Gly51–Pro71, Phe80–Ile100, Leu104–Ala124, and Val139–Tyr158.

It belongs to the CDP-archaeol synthase family. The cofactor is Mg(2+).

The protein localises to the cell membrane. It catalyses the reaction 2,3-bis-O-(geranylgeranyl)-sn-glycerol 1-phosphate + CTP + H(+) = CDP-2,3-bis-O-(geranylgeranyl)-sn-glycerol + diphosphate. It participates in membrane lipid metabolism; glycerophospholipid metabolism. Its function is as follows. Catalyzes the formation of CDP-2,3-bis-(O-geranylgeranyl)-sn-glycerol (CDP-archaeol) from 2,3-bis-(O-geranylgeranyl)-sn-glycerol 1-phosphate (DGGGP) and CTP. This reaction is the third ether-bond-formation step in the biosynthesis of archaeal membrane lipids. In Pyrococcus furiosus (strain ATCC 43587 / DSM 3638 / JCM 8422 / Vc1), this protein is CDP-archaeol synthase.